The chain runs to 513 residues: Lysine--tRNA ligase (513 aa).

Residues 1-11 (MTEPTQPNAAQ) are compositionally biased toward polar residues. A disordered region spans residues 1 to 22 (MTEPTQPNAAQPNVVPEVDDNK). Mg(2+)-binding residues include E423 and E430.

The protein belongs to the class-II aminoacyl-tRNA synthetase family. Homodimer. Requires Mg(2+) as cofactor.

It localises to the cytoplasm. It carries out the reaction tRNA(Lys) + L-lysine + ATP = L-lysyl-tRNA(Lys) + AMP + diphosphate. The chain is Lysine--tRNA ligase from Paraburkholderia xenovorans (strain LB400).